Consider the following 435-residue polypeptide: tRNA(Ile)-lysidine synthase (435 aa).

23–28 (SGGMDS) is an ATP binding site.

It belongs to the tRNA(Ile)-lysidine synthase family.

The protein resides in the cytoplasm. The catalysed reaction is cytidine(34) in tRNA(Ile2) + L-lysine + ATP = lysidine(34) in tRNA(Ile2) + AMP + diphosphate + H(+). Its function is as follows. Ligates lysine onto the cytidine present at position 34 of the AUA codon-specific tRNA(Ile) that contains the anticodon CAU, in an ATP-dependent manner. Cytidine is converted to lysidine, thus changing the amino acid specificity of the tRNA from methionine to isoleucine. This chain is tRNA(Ile)-lysidine synthase, found in Xanthomonas campestris pv. campestris (strain 8004).